Consider the following 248-residue polypeptide: Probable transcriptional regulatory protein FTN_1028 (248 aa).

This sequence belongs to the TACO1 family.

It is found in the cytoplasm. The protein is Probable transcriptional regulatory protein FTN_1028 of Francisella tularensis subsp. novicida (strain U112).